The following is a 421-amino-acid chain: 3-phosphoshikimate 1-carboxyvinyltransferase (421 aa).

Residues Lys19, Ser20, and Arg24 each contribute to the 3-phosphoshikimate site. Residue Lys19 participates in phosphoenolpyruvate binding. Phosphoenolpyruvate contacts are provided by Gly88 and Arg116. Ser160, Gln162, Asp307, and Lys334 together coordinate 3-phosphoshikimate. Gln162 serves as a coordination point for phosphoenolpyruvate. Residue Asp307 is the Proton acceptor of the active site. Arg338 and Arg380 together coordinate phosphoenolpyruvate.

Belongs to the EPSP synthase family. In terms of assembly, monomer.

It localises to the cytoplasm. It carries out the reaction 3-phosphoshikimate + phosphoenolpyruvate = 5-O-(1-carboxyvinyl)-3-phosphoshikimate + phosphate. It functions in the pathway metabolic intermediate biosynthesis; chorismate biosynthesis; chorismate from D-erythrose 4-phosphate and phosphoenolpyruvate: step 6/7. Its function is as follows. Catalyzes the transfer of the enolpyruvyl moiety of phosphoenolpyruvate (PEP) to the 5-hydroxyl of shikimate-3-phosphate (S3P) to produce enolpyruvyl shikimate-3-phosphate and inorganic phosphate. The sequence is that of 3-phosphoshikimate 1-carboxyvinyltransferase from Thermotoga neapolitana (strain ATCC 49049 / DSM 4359 / NBRC 107923 / NS-E).